Consider the following 385-residue polypeptide: Probable caffeine synthase 3 (385 aa).

Positions 18, 62, 67, 101, 102, 140, and 141 each coordinate S-adenosyl-L-homocysteine. Caffeine is bound by residues Y158, Q161, and F162. N179 serves as a coordination point for Mg(2+). T238 is a caffeine binding site. Mg(2+) contacts are provided by D261, F263, and N264. Residue Y369 participates in caffeine binding.

This sequence belongs to the methyltransferase superfamily. Type-7 methyltransferase family. Mg(2+) serves as cofactor. As to expression, expressed in roots, stems, young and old leaves.

It functions in the pathway alkaloid biosynthesis. May be involved in the biosynthesis of caffeine. The chain is Probable caffeine synthase 3 from Coffea arabica (Arabian coffee).